A 381-amino-acid chain; its full sequence is Alanine racemase, catabolic (381 aa).

Lys-55 acts as the Proton acceptor; specific for D-alanine in catalysis. Lys-55 is modified (N6-(pyridoxal phosphate)lysine). Arg-154 contacts substrate. The active-site Proton acceptor; specific for L-alanine is the Tyr-276. A substrate-binding site is contributed by Met-322.

Belongs to the alanine racemase family. Pyridoxal 5'-phosphate serves as cofactor.

The enzyme catalyses L-alanine = D-alanine. Isomerizes L-alanine to D-alanine which is then oxidized to pyruvate by DadA. This is Alanine racemase, catabolic (dadB) from Mesorhizobium japonicum (strain LMG 29417 / CECT 9101 / MAFF 303099) (Mesorhizobium loti (strain MAFF 303099)).